The chain runs to 370 residues: MRSFCIAALLAVASAFTTQPTSFTVKTANVGERASGVFPEQSSAHRTRKATIVMDGKANAIRDRITSVKNTRKITMAMKLVRAAPKVRRAQDAVLATRPFSETLQSVFGGLIQRLGGESVDLPLLTEREVKKVTLLVITGDRGLCGGYNSFMIKKAEARFNELKKNGVEADLILVGKKGIAYFERRGFPIRKKYETGQNPTAKQALAIAEEVSSTFLSGESDAVELLYTKFVSLIASSPSIRTLVPFSASDITAKGDEVFQLTSESGQFGVERTELDVAAPQEFPNDMIFEQDPIQIVNAILPLYLNGQILRTLQESVASELAARMQSMQSASDNAGSLAKQLNLEYNRARQAAVTQELLEIISGASALD.

The transit peptide at 1 to 54 (MRSFCIAALLAVASAFTTQPTSFTVKTANVGERASGVFPEQSSAHRTRKATIVM) directs the protein to the chloroplast. Residue Cys-145 is part of the active site.

It belongs to the ATPase gamma chain family. As to quaternary structure, F-type ATPases have 2 components, CF(1) - the catalytic core - and CF(0) - the membrane proton channel. CF(1) has five subunits: alpha(3), beta(3), gamma(1), delta(1), epsilon(1). CF(0) has four main subunits: a, b, b' and c.

It localises to the plastid. The protein resides in the chloroplast thylakoid membrane. In terms of biological role, produces ATP from ADP in the presence of a proton gradient across the membrane. The gamma chain is believed to be important in regulating ATPase activity and the flow of protons through the CF(0) complex. This is ATP synthase gamma chain, chloroplastic (ATPC) from Phaeodactylum tricornutum (Diatom).